The primary structure comprises 222 residues: DnaJ homolog subfamily B member 9 (222 aa).

Residues 1-23 (MATPQSVFVFAICILMITELILA) form the signal peptide. In terms of domain architecture, J spans 26 to 90 (SYYDILGVPK…HRRKEYDTVG (65 aa)). The divergent targeting domain stretch occupies residues 91–222 (HTAFTNGKGQ…VTTYTDCSGQ (132 aa)). A Phosphoserine modification is found at Ser-133.

As to quaternary structure, interacts with HSPA5/BiP; interaction is direct. Interacts with ERN1/IRE1 (via the luminal region). Interacts with DERL1.

It is found in the endoplasmic reticulum lumen. Co-chaperone for Hsp70 protein HSPA5/BiP that acts as a key repressor of the ERN1/IRE1-mediated unfolded protein response (UPR). J domain-containing co-chaperones stimulate the ATPase activity of Hsp70 proteins and are required for efficient substrate recognition by Hsp70 proteins. In the unstressed endoplasmic reticulum, interacts with the luminal region of ERN1/IRE1 and selectively recruits HSPA5/BiP: HSPA5/BiP disrupts the dimerization of the active ERN1/IRE1 luminal region, thereby inactivating ERN1/IRE1. Also involved in endoplasmic reticulum-associated degradation (ERAD) of misfolded proteins. Required for survival of B-cell progenitors and normal antibody production. The sequence is that of DnaJ homolog subfamily B member 9 from Cricetulus griseus (Chinese hamster).